We begin with the raw amino-acid sequence, 2382 residues long: Highly reducing polyketide synthase srdA (2382 aa).

Residues methionine 1–glycine 25 are disordered. The Ketosynthase family 3 (KS3) domain occupies glutamine 44–alanine 474. Catalysis depends on for beta-ketoacyl synthase activity residues cysteine 217, histidine 352, and histidine 390. Residues valine 580–lysine 891 are malonyl-CoA:ACP transacylase (MAT) domain. Catalysis depends on serine 672, which acts as the For malonyltransferase activity. An N-terminal hotdog fold region spans residues histidine 971–alanine 1108. Residues histidine 971–glutamine 1274 form a dehydratase (DH) domain region. In terms of domain architecture, PKS/mFAS DH spans histidine 971–glutamine 1275. Histidine 1003 acts as the Proton acceptor; for dehydratase activity in catalysis. The interval methionine 1121–glutamine 1275 is C-terminal hotdog fold. The Proton donor; for dehydratase activity role is filled by aspartate 1189. Residues glycine 1668–valine 1979 are enoyl reductase (ER) domain. Residues serine 2004–serine 2180 form a ketoreductase (KR) domain region. The region spanning serine 2298 to methionine 2376 is the Carrier domain. Serine 2335 bears the O-(pantetheine 4'-phosphoryl)serine mark.

Functionally, highly reducing polyketide synthase; part of the gene cluster that mediates the biosynthesis of sordarial, a salicylic aldehyde structurally related to the phytotoxin pyriculol. The most interesting aspect of this pathway is formation of an aromatic product from the highly reducing polyketide synthase srdA. SrdA synthesizes a reduced polyketide chain from one molecule of acetyl-CoA and five molecules of malonyl-CoA. The polyketide chain is then reductively released as an aldehyde. The oxidoreductases srdC, srdD and srdE then oxidize one of the hydroxy groups to facilitate the intramolecular aldol condensation, followed by dehydration to yield a salicylic aldehyde. This aldehyde can undergo facile reduction by endogenous reductases to yield the alcohol 1-hydroxy-2-hydroxymethyl-3-pent-1,3-dienylbenzene. The flavin-dependent srdI counteract against the propensity of the aldehydes to be reduced under physiological conditions and is responsible for reoxidizing 1-hydroxy-2-hydroxymethyl-3-pent-1,3-dienylbenzene back to the salicylic aldehyde. This salicylic aldehyde is then selectively epoxidized by the cupin-domain-containing oxidoreductase srdB to yield the epoxide, which can be hydrolyzed stereoselectively by the hydrolase srdG to give the final product sordarial. The polypeptide is Highly reducing polyketide synthase srdA (Neurospora crassa (strain ATCC 24698 / 74-OR23-1A / CBS 708.71 / DSM 1257 / FGSC 987)).